The chain runs to 418 residues: Ras association domain-containing protein 5 (418 aa).

The tract at residues 1–118 is disordered; the sequence is MAMASPAIGQ…QPQDPRVPAE (118 aa). N-acetylthreonine is present on Ala2. Residues 77–89 show a composition bias toward low complexity; that stretch reads SRPARPLRPGLQQ. The segment at 122 to 170 adopts a Phorbol-ester/DAG-type zinc-finger fold; the sequence is GHCFAELVLPGGPGWCDLCGREVLRQALRCTNCKFTCHPECRSLIQLDC. Phosphoserine occurs at positions 182 and 279. The 91-residue stretch at 274 to 364 folds into the Ras-associating domain; that stretch reads TDKRTSFYLP…LSFVLKENET (91 aa). Position 352 is a phosphothreonine (Thr352). One can recognise an SARAH domain in the interval 366 to 413; that stretch reads EVEWDAFSIPELQNFLTILEKEEQDKIQQVQKKYDKFRQKLEEALRES.

In terms of assembly, interacts directly with activated HRAS; a RASSF5-STK4/MST1 complex probably associates with activated HRAS. Interacts with KRAS. Probably interacts with Ras-like GTPases RRAS, MRAS, RAP1B, RAP2A and RALA. Interacts with RRAS2. Can self-associate. Interacts with RSSF1 isoform A. The RSSF1 isoform A-RSSF5 heterodimer probably mediates the association of RSSF1 with HRAS. Isoform 2 interacts with activated RAP1A and ITGAL/LFA-1. Binds STK4/MST1, inhibiting STK4/MST1 autoactivation. In terms of tissue distribution, widely expressed. Frequently down-regulated in lung tumor cell lines and primary lung tumors.

It is found in the cytoplasm. It localises to the cytoskeleton. Functionally, potential tumor suppressor. Seems to be involved in lymphocyte adhesion by linking RAP1A activation upon T-cell receptor or chemokine stimulation to integrin activation. Isoform 2 stimulates lymphocyte polarization and the patch-like distribution of ITGAL/LFA-1, resulting in an enhanced adhesion to ICAM1. Together with RAP1A may participate in regulation of microtubule growth. The association of isoform 2 with activated RAP1A is required for directional movement of endothelial cells during wound healing. May be involved in regulation of Ras apoptotic function. The RASSF5-STK4/MST1 complex may mediate HRAS and KRAS induced apoptosis. This chain is Ras association domain-containing protein 5 (RASSF5), found in Homo sapiens (Human).